Reading from the N-terminus, the 627-residue chain is Carnitine O-acetyltransferase (627 aa).

A propeptide spanning residues 1–30 is cleaved from the precursor; the sequence is MDRKQKQAEKARPYGLLKPAALGKIPGRFQ. Lysine 94 is subject to N6-succinyllysine. The residue at position 262 (lysine 262) is an N6-acetyllysine; alternate. Position 262 is an N6-succinyllysine; alternate (lysine 262). The residue at position 269 (lysine 269) is an N6-acetyllysine. Histidine 344 serves as the catalytic Proton acceptor. CoA-binding positions include lysine 420 and 424–431; that span reads KSEKISPD. Positions 453 and 455 each coordinate (R)-carnitine. Serine 457 lines the CoA pocket. Threonine 466 serves as a coordination point for (R)-carnitine. Glutamine 556 is a binding site for CoA. A Microbody targeting signal motif is present at residues 625–627; sequence SKL.

Belongs to the carnitine/choline acetyltransferase family. Monomer.

It localises to the endoplasmic reticulum. Its subcellular location is the peroxisome. The protein localises to the mitochondrion inner membrane. It carries out the reaction (R)-carnitine + acetyl-CoA = O-acetyl-(R)-carnitine + CoA. The enzyme catalyses propanoyl-CoA + (R)-carnitine = O-propanoyl-(R)-carnitine + CoA. The catalysed reaction is butanoyl-CoA + (R)-carnitine = O-butanoyl-(R)-carnitine + CoA. It catalyses the reaction hexanoyl-CoA + (R)-carnitine = O-hexanoyl-(R)-carnitine + CoA. It carries out the reaction octanoyl-CoA + (R)-carnitine = O-octanoyl-(R)-carnitine + CoA. The enzyme catalyses decanoyl-CoA + (R)-carnitine = O-decanoyl-(R)-carnitine + CoA. The catalysed reaction is 3-methylbutanoyl-CoA + (R)-carnitine = O-3-methylbutanoyl-(R)-carnitine + CoA. It catalyses the reaction 2-methylpropanoyl-CoA + (R)-carnitine = O-isobutanoyl-(R)-carnitine + CoA. It carries out the reaction 2-methylbutanoyl-CoA + (R)-carnitine = O-2-methylbutanoyl-(R)-carnitine + CoA. The enzyme catalyses acetoacetyl-CoA + (R)-carnitine = O-3-oxobutanoyl-(R)-carnitine + CoA. The catalysed reaction is 3-hydroxybutanoyl-CoA + (R)-carnitine = O-3-hydroxybutanoyl-(R)-carnitine + CoA. It catalyses the reaction 4,8-dimethylnonanoyl-CoA + (R)-carnitine = O-4,8-dimethylnonanoyl-(R)-carnitine + CoA. It carries out the reaction 2,6-dimethylheptanoyl-CoA + (R)-carnitine = O-2,6-dimethylheptanoyl-(R)-carnitine + CoA. In terms of biological role, catalyzes the reversible transfer of acyl groups from carnitine to coenzyme A (CoA) and regulates the acyl-CoA/CoA ratio. Also plays a crucial role in the transport of fatty acids for beta-oxidation. Responsible for the synthesis of short- and branched-chain acylcarnitines. Active towards some branched-chain amino acid oxidation pathway (BCAAO) intermediates. Trans-2-enoyl-CoAs and 2-methylacyl-CoAs are poor substrates. This is Carnitine O-acetyltransferase (CRAT) from Columba livia (Rock dove).